The sequence spans 1341 residues: WASH complex subunit 2A (1341 aa).

The interval 1–220 (MMNRTTPDQE…VGSDRGSIVD (220 aa)) is sufficient for interaction with WASHC3, WASHC4 and WASHC5; required for interaction with WASHC1. Residues 202–214 (GELSSEEGSVGSD) show a composition bias toward low complexity. The segment at 202 to 405 (GELSSEEGSV…SSSKPGKKIP (204 aa)) is disordered. The segment covering 220–232 (DTEEEKEEEESDE) has biased composition (acidic residues). Basic and acidic residues predominate over residues 233 to 244 (DFAHHSDNEQNR). 2 stretches are compositionally biased toward acidic residues: residues 250–259 (SDEEEDDDGC) and 266–276 (EKEEEDIEDIE). The segment covering 293-307 (LAARIKGDAVGRVDE) has biased composition (basic and acidic residues). A compositionally biased stretch (gly residues) spans 355 to 366 (GSGGGLFSGGKG). A sufficient for interaction with CCDC93 region spans residues 356-600 (SGGGLFSGGK…QTLCLQAQRE (245 aa)). The tract at residues 356–742 (SGGGLFSGGK…KEAQLGVKSV (387 aa)) is required for interaction with CCDC22 and VPS35L. Residues 357-1341 (GGGLFSGGKG…DDPLNAFGGQ (985 aa)) form an interaction with VPS35 region. Short sequence motifs (LFa) lie at residues 367 to 378 (LFDDEDEESDLF), 411 to 419 (VFLGDTDVF), 450 to 463 (LFDDDDGDDDDDFF), and 482 to 491 (IFGDEEGDLF). The disordered stretch occupies residues 422–554 (ASVPSMKEPQ…EDLFSSQSAS (133 aa)). Residues 451–462 (FDDDDGDDDDDF) are compositionally biased toward acidic residues. Positions 507 to 517 (DENKARAEKKV) are enriched in basic and acidic residues. Residues 518-536 (TLSSSKNLKPSSETKTQKG) show a composition bias toward polar residues. 3 short sequence motifs (LFa) span residues 537 to 548 (LFSDEEDSEDLF), 572 to 583 (LFDDEDEEDNLF), and 617 to 629 (LFSSDEEDQWNIP). Ser539 bears the Phosphoserine mark. Disordered stretches follow at residues 621 to 664 (DEED…KTSL), 696 to 739 (DSGG…QLGV), and 751 to 838 (ESLK…KSTG). Basic and acidic residues predominate over residues 637-647 (SDSRSKGEPRD). 3 short sequence motifs (LFa) span residues 664–674 (LFEEDEEDDLF), 690–702 (LFEDDVDSGGSLF), and 726–738 (LFSDEEEKEAQLG). The span at 751-768 (ESLKFGRTDVAESEKEGL) shows a compositional bias: basic and acidic residues. The short motif at 803-817 (LFDEEEDKMEDQNII) is the LFa 11 element. A compositionally biased stretch (basic and acidic residues) spans 823–834 (EVGKGRDPDAHP). 3 short sequence motifs (LFa) span residues 839–847 (VFQDEELLF), 856–862 (DPDVDLF), and 878–888 (LFGDDEDDDLF). Disordered stretches follow at residues 881–951 (DDED…KEPS) and 988–1205 (FPSS…LEDE). 2 stretches are compositionally biased toward basic and acidic residues: residues 898–911 (QEKKRVVKKDHSVD) and 917–931 (KHPESIQGSKEKGIW). Residues 937–1341 (QDSSGLAPFK…DDPLNAFGGQ (405 aa)) form an interaction with phospholipids region. Residues 1028–1046 (NKSRVKMRGKRRPQTRAAR) are compositionally biased toward basic residues. A required for interaction with F-actin-capping protein subunit alpha (CAPZA1 or CAPZA2 or CAPZA3) region spans residues 1029–1047 (KSRVKMRGKRRPQTRAARR). A phosphoserine mark is found at Ser1054 and Ser1087. Over residues 1094-1110 (EALAAAAAPWEGGPVPG) the composition is skewed to low complexity. Ser1114 bears the Phosphoserine mark. 6 consecutive short sequence motifs (LFa) follow at residues 1129-1136 (LFDSGDIF), 1171-1185 (MFPALGEASSDDDLF), 1201-1209 (LLEDEDDLF), 1234-1240 (IFEDDIF), 1262-1270 (LFDDNIDIF), and 1290-1299 (IFDDDMDDIF). The segment covering 1135–1145 (IFSTGTGSQSV) has biased composition (polar residues). A disordered region spans residues 1302–1326 (GIQAKTTKPKSRSAQAAPEPRFEHK). The LFa 21 signature appears at 1330–1338 (IFDDPLNAF).

Belongs to the FAM21 family. As to quaternary structure, component of the WASH core complex also described as WASH regulatory complex (SHRC) composed of WASH (WASHC1, WASH2P or WASH3P), WASHC2 (WASHC2A or WASHC2C), WASHC3, WASHC4 and WASHC5; in the complex interacts (via N-terminus) directly with WASHC1. The WASH core complex associates with the F-actin-capping protein dimer (formed by CAPZA1, CAPZA2 or CAPZA3 and CAPZB) in a transient or substoichiometric manner which was initially described as WASH complex. Interacts with VPS35; mediates the association with the retromer CSC complex. Interacts with FKBP15. Interacts with CCDC93, CCDC22, VPS35L; indicative for an association of the WASH core complex with the CCC and retriever complexes. Directly interacts with TBC1D23.

The protein localises to the early endosome membrane. It is found in the cell membrane. In terms of biological role, acts at least in part as component of the WASH core complex whose assembly at the surface of endosomes inhibits WASH nucleation-promoting factor (NPF) activity in recruiting and activating the Arp2/3 complex to induce actin polymerization and is involved in the fission of tubules that serve as transport intermediates during endosome sorting. Mediates the recruitment of the WASH core complex to endosome membranes via binding to phospholipids and VPS35 of the retromer CSC. Mediates the recruitment of the F-actin-capping protein dimer to the WASH core complex probably promoting localized F-actin polymerization needed for vesicle scission. Via its C-terminus binds various phospholipids, most strongly phosphatidylinositol 4-phosphate (PtdIns-(4)P), phosphatidylinositol 5-phosphate (PtdIns-(5)P) and phosphatidylinositol 3,5-bisphosphate (PtdIns-(3,5)P2). Involved in the endosome-to-plasma membrane trafficking and recycling of SNX27-retromer-dependent cargo proteins, such as GLUT1. Required for the association of DNAJC13, ENTR1, ANKRD50 with retromer CSC subunit VPS35. Required for the endosomal recruitment of CCC complex subunits COMMD1 and CCDC93 as well as the retriever complex subunit VPS35L. This Homo sapiens (Human) protein is WASH complex subunit 2A.